We begin with the raw amino-acid sequence, 576 residues long: MSGLIPQPFIDDLLNRTDLVELIDGYVPLKKRGNSHIACCPFHNEKTPSFNVVAKKQFYHCFGCGASGNAISFVMNYLNQGFTDAVETLRRAWVKCPRDGTGEKHKSSLNLYNLMSEVSQYYQKKLKYNGQVAIDYLRNRGLSGEIAKRYHLGYAPEGWHNLEKAFPNNQRELLSTGMLIKSDEGKIYDRYRNRIMFPIHDRNGRVIGFGGRVLDKDQKPKYLNSPETVLFQKSRELYGLHQVLSQQKNPDSIIVVEGYMDVIALAQHGIFNVVATLGTATSTFHIQLLAKHTKHLIFCFDGDAAGKQAAWRALESSLPHLNAGLDAGFIFLPNEHDPDSLVRNEGKNGFLELLQQATPLHRFFFDTLSKDINLSNPAGKTQLINAVKPYLQKMVEGSYKQLLIDDLSRLTHIESHRLTNLITDKSESKPEVQAAISRSPLRIAIALLLQNPEIYSIAIQQINPALLHEQEHHILLKLLQQLKDKPNANTATLIEFWRNSSYFELIVKLAAWDHQVPEQELTKEFIDVLLFLQKQNREILIRQYIEKSRKTGLTEAERLSLQNLLKERHGQAEIEK.

A CHC2-type zinc finger spans residues 40-64 (CPFHNEKTPSFNVVAKKQFYHCFGC). Residues 251 to 333 (DSIIVVEGYM…GLDAGFIFLP (83 aa)) form the Toprim domain. Mg(2+) contacts are provided by glutamate 257, aspartate 301, and aspartate 303.

It belongs to the DnaG primase family. In terms of assembly, monomer. Interacts with DnaB. Zn(2+) is required as a cofactor. Requires Mg(2+) as cofactor.

It carries out the reaction ssDNA + n NTP = ssDNA/pppN(pN)n-1 hybrid + (n-1) diphosphate.. Functionally, RNA polymerase that catalyzes the synthesis of short RNA molecules used as primers for DNA polymerase during DNA replication. The chain is DNA primase from Legionella pneumophila.